A 1020-amino-acid chain; its full sequence is P3N-PIPO polyprotein (1020 aa).

The Peptidase S30 domain occupies 165 to 308; that stretch reads RMSEASLQLF…KKQSNEIIHY (144 aa). Catalysis depends on for P1 proteinase activity residues histidine 216, aspartate 225, and serine 259. Positions 360-363 match the Involved in interaction with stylet and aphid transmission motif; the sequence is KITC. An Involved in virions binding and aphid transmission motif is present at residues 618–620; it reads PTK. One can recognise a Peptidase C6 domain in the interval 644 to 766; sequence MFIAKAGYCY…DSNMKTYLVG (123 aa). Residues cysteine 652 and histidine 725 each act as for helper component proteinase activity in the active site.

The protein belongs to the potyviridae P3N-PIPO polyprotein family. As to quaternary structure, interacts (via PIPO domain) with host PCaP1 protein; this interaction may help to anchor the movement complex to the plasma membrane from which the complex could move to the plasmodesmata. Post-translationally, potyviral RNA is expressed as two polyproteins which undergo post-translational proteolytic processing. Genome polyprotein is processed by NIa-pro, P1 and HC-pro proteinases resulting in the production of at least ten individual proteins. P3N-PIPO is cleaved by P1 and HC-pro proteinases resulting in the production of three individual proteins. The P1 proteinase and the HC-pro cleave only their respective C-termini autocatalytically.

It localises to the host cell junction. It is found in the host plasmodesma. The catalysed reaction is Hydrolyzes a Gly-|-Gly bond at its own C-terminus, commonly in the sequence -Tyr-Xaa-Val-Gly-|-Gly, in the processing of the potyviral polyprotein.. Its function is as follows. Required for aphid transmission and also has proteolytic activity. Only cleaves a Gly-Gly dipeptide at its own C-terminus. Interacts with virions and aphid stylets. Acts as a suppressor of RNA-mediated gene silencing, also known as post-transcriptional gene silencing (PTGS), a mechanism of plant viral defense that limits the accumulation of viral RNAs. May have RNA-binding activity. In terms of biological role, allows efficient cell to cell propagation, by bypassing the host cell wall barrier. Transports viral genome to neighboring plant cells directly through plasmosdesmata, without any budding. This is P3N-PIPO polyprotein from Plum pox potyvirus (isolate NAT) (PPV).